The chain runs to 1053 residues: Phosphoenolpyruvate carboxylase (1053 aa).

Residue His-246 is part of the active site. Positions 461–473 (RNTRLQQQQEKDP) are enriched in basic and acidic residues. The disordered stretch occupies residues 461–480 (RNTRLQQQQEKDPTTPLPEY). The active site involves Lys-699.

The protein belongs to the PEPCase type 1 family. Requires Mg(2+) as cofactor.

It carries out the reaction oxaloacetate + phosphate = phosphoenolpyruvate + hydrogencarbonate. Forms oxaloacetate, a four-carbon dicarboxylic acid source for the tricarboxylic acid cycle. In Synechococcus sp. (strain ATCC 27144 / PCC 6301 / SAUG 1402/1) (Anacystis nidulans), this protein is Phosphoenolpyruvate carboxylase (ppc).